Consider the following 29-residue polypeptide: Myosin heavy chain, muscle (29 aa).

The span at 1–16 (SKYESEGVARSEELQE) shows a compositional bias: basic and acidic residues. The interval 1 to 29 (SKYESEGVARSEELQEVHQAFADAGRKPI) is disordered.

As to quaternary structure, muscle myosin is a hexameric protein that consists of 2 heavy chain subunits (MHC), 2 alkali light chain subunits (MLC) and 2 regulatory light chain subunits (MLC-2).

The protein localises to the cytoplasm. Its subcellular location is the myofibril. Functionally, muscle contraction. In Bombyx mori (Silk moth), this protein is Myosin heavy chain, muscle.